We begin with the raw amino-acid sequence, 303 residues long: MNPQELKSILSHGLLSFPVTDFNAQGDFNQAGYIKRLEWLAPYGASALFAAGGTGEFFSLAASEYSQVIKTAVDTCAKSVPILAGVGGSTRQAIEYAQEAERLGAKGLLLLPHYLTEASQDGVAAHVEAVCKSVNIGVVVYNRNVCRLNADLLEKLAERCPNLIGYKDGLGDIELMVSIRRRLGDRFSYLGGLPTAEVYAAAYKALGVPVYSSAVFNFIPKTAMDFYHAIARDDHATVGKLIDDFFLPYLDIRNRKAGYAVSIVKAGAKIAGYDAGPVRTPLTDLTAEEYEMLAALMDKMGPQ.

Belongs to the DapA family.

It catalyses the reaction 5-dehydro-4-deoxy-D-glucarate + H(+) = 2,5-dioxopentanoate + CO2 + H2O. It functions in the pathway carbohydrate acid metabolism; D-glucarate degradation; 2,5-dioxopentanoate from D-glucarate: step 2/2. The polypeptide is Probable 5-dehydro-4-deoxyglucarate dehydratase (Pseudomonas putida (strain W619)).